The sequence spans 902 residues: 3'-5' exonuclease DinG (902 aa).

Residues 8–161 (VVDLETTGNQ…DEDATTTAKL (154 aa)) form the Exonuclease domain. A Helicase ATP-binding domain is found at 241-496 (KNVTQSLNLT…KAVDKLEQQR (256 aa)). 276–283 (APLGSGKS) serves as a coordination point for ATP. Residues 448 to 451 (DEAH) carry the DEAH box motif. The Helicase C-terminal domain maps to 714 to 883 (YIVEYITVTQ…HFKQRKGNIK (170 aa)).

The protein belongs to the helicase family. DinG subfamily. Type 2 sub-subfamily.

Functionally, 3'-5' exonuclease. The sequence is that of 3'-5' exonuclease DinG from Staphylococcus epidermidis (strain ATCC 35984 / DSM 28319 / BCRC 17069 / CCUG 31568 / BM 3577 / RP62A).